The primary structure comprises 310 residues: ADP-L-glycero-D-manno-heptose-6-epimerase (310 aa).

NADP(+) is bound by residues 10 to 11, 31 to 32, lysine 38, lysine 53, 75 to 79, and asparagine 92; these read FI, DN, and EGACS. The Proton acceptor role is filled by tyrosine 140. Residue lysine 144 participates in NADP(+) binding. Asparagine 169 is a binding site for substrate. NADP(+) contacts are provided by valine 170 and lysine 178. Lysine 178 (proton acceptor) is an active-site residue. Residues serine 180, histidine 187, 201–204, arginine 209, and tyrosine 272 contribute to the substrate site; that span reads FEGS.

Belongs to the NAD(P)-dependent epimerase/dehydratase family. HldD subfamily. In terms of assembly, homopentamer. NADP(+) serves as cofactor.

It catalyses the reaction ADP-D-glycero-beta-D-manno-heptose = ADP-L-glycero-beta-D-manno-heptose. It functions in the pathway nucleotide-sugar biosynthesis; ADP-L-glycero-beta-D-manno-heptose biosynthesis; ADP-L-glycero-beta-D-manno-heptose from D-glycero-beta-D-manno-heptose 7-phosphate: step 4/4. Catalyzes the interconversion between ADP-D-glycero-beta-D-manno-heptose and ADP-L-glycero-beta-D-manno-heptose via an epimerization at carbon 6 of the heptose. The sequence is that of ADP-L-glycero-D-manno-heptose-6-epimerase from Salmonella heidelberg (strain SL476).